We begin with the raw amino-acid sequence, 75 residues long: Putative UPF0377 protein YJL222W-A (75 aa).

This sequence belongs to the UPF0377 family.

The protein is Putative UPF0377 protein YJL222W-A of Saccharomyces cerevisiae (strain ATCC 204508 / S288c) (Baker's yeast).